Consider the following 87-residue polypeptide: Small ribosomal subunit protein uS17 (87 aa).

It belongs to the universal ribosomal protein uS17 family. In terms of assembly, part of the 30S ribosomal subunit.

Its function is as follows. One of the primary rRNA binding proteins, it binds specifically to the 5'-end of 16S ribosomal RNA. This is Small ribosomal subunit protein uS17 from Lacticaseibacillus casei (strain BL23) (Lactobacillus casei).